We begin with the raw amino-acid sequence, 467 residues long: ATP synthase subunit beta (467 aa).

Position 157–164 (157–164) interacts with ATP; it reads GGAGVGKT.

The protein belongs to the ATPase alpha/beta chains family. In terms of assembly, F-type ATPases have 2 components, CF(1) - the catalytic core - and CF(0) - the membrane proton channel. CF(1) has five subunits: alpha(3), beta(3), gamma(1), delta(1), epsilon(1). CF(0) has three main subunits: a(1), b(2) and c(9-12). The alpha and beta chains form an alternating ring which encloses part of the gamma chain. CF(1) is attached to CF(0) by a central stalk formed by the gamma and epsilon chains, while a peripheral stalk is formed by the delta and b chains.

The protein localises to the cell inner membrane. It carries out the reaction ATP + H2O + 4 H(+)(in) = ADP + phosphate + 5 H(+)(out). In terms of biological role, produces ATP from ADP in the presence of a proton gradient across the membrane. The catalytic sites are hosted primarily by the beta subunits. In Desulfosudis oleivorans (strain DSM 6200 / JCM 39069 / Hxd3) (Desulfococcus oleovorans), this protein is ATP synthase subunit beta.